Consider the following 298-residue polypeptide: Tyrosine recombinase XerC (298 aa).

One can recognise a Core-binding (CB) domain in the interval methionine 1–asparagine 85. The region spanning arginine 106–aspartate 285 is the Tyr recombinase domain. Residues arginine 146, lysine 170, histidine 237, arginine 240, and histidine 263 contribute to the active site. Tyrosine 272 functions as the O-(3'-phospho-DNA)-tyrosine intermediate in the catalytic mechanism.

The protein belongs to the 'phage' integrase family. XerC subfamily. As to quaternary structure, forms a cyclic heterotetrameric complex composed of two molecules of XerC and two molecules of XerD.

Its subcellular location is the cytoplasm. Functionally, site-specific tyrosine recombinase, which acts by catalyzing the cutting and rejoining of the recombining DNA molecules. The XerC-XerD complex is essential to convert dimers of the bacterial chromosome into monomers to permit their segregation at cell division. It also contributes to the segregational stability of plasmids. The polypeptide is Tyrosine recombinase XerC (Pseudomonas fluorescens (strain ATCC BAA-477 / NRRL B-23932 / Pf-5)).